We begin with the raw amino-acid sequence, 320 residues long: Cytosolic Fe-S cluster assembly factor NUBP1 (320 aa).

Met-1 bears the N-acetylmethionine mark. [4Fe-4S] cluster-binding residues include Cys-8, Cys-22, Cys-25, and Cys-31. 62 to 69 (GKGGVGKS) is a binding site for ATP. Residues Cys-235 and Cys-238 each contribute to the [4Fe-4S] cluster site. At Ser-319 the chain carries Phosphoserine.

The protein belongs to the Mrp/NBP35 ATP-binding proteins family. NUBP1/NBP35 subfamily. In terms of assembly, heterotetramer of 2 NUBP1 and 2 NUBP2 chains. Interacts with KIFC1. Interacts with NUBP2. Interacts with the BBS/CCT complex subunit CCT1. It depends on [4Fe-4S] cluster as a cofactor.

It localises to the cytoplasm. Its subcellular location is the nucleus. The protein localises to the cell projection. It is found in the cytoskeleton. The protein resides in the cilium axoneme. It localises to the cilium basal body. Its subcellular location is the microtubule organizing center. The protein localises to the centrosome. It is found in the centriole. Component of the cytosolic iron-sulfur (Fe/S) protein assembly (CIA) machinery. Required for maturation of extramitochondrial Fe-S proteins. The NUBP1-NUBP2 heterotetramer forms a Fe-S scaffold complex, mediating the de novo assembly of an Fe-S cluster and its transfer to target apoproteins. Implicated in the regulation of centrosome duplication. Negatively regulates cilium formation and structure. The protein is Cytosolic Fe-S cluster assembly factor NUBP1 of Homo sapiens (Human).